A 284-amino-acid polypeptide reads, in one-letter code: Tryptophan synthase alpha chain (284 aa).

Residues E59 and D70 each act as proton acceptor in the active site.

This sequence belongs to the TrpA family. As to quaternary structure, tetramer of two alpha and two beta chains.

It catalyses the reaction (1S,2R)-1-C-(indol-3-yl)glycerol 3-phosphate + L-serine = D-glyceraldehyde 3-phosphate + L-tryptophan + H2O. The protein operates within amino-acid biosynthesis; L-tryptophan biosynthesis; L-tryptophan from chorismate: step 5/5. Its function is as follows. The alpha subunit is responsible for the aldol cleavage of indoleglycerol phosphate to indole and glyceraldehyde 3-phosphate. The protein is Tryptophan synthase alpha chain of Azospirillum brasilense.